The chain runs to 552 residues: HTH-type transcriptional regulator SgrR (552 aa).

Positions 1 to 116 (MPSARLQQQF…LVSHLGRSFR (116 aa)) constitute an HTH marR-type domain. The segment at residues 26 to 49 (LNELAALLSCSRRHMRTLLNTMQD) is a DNA-binding region (H-T-H motif). Residues 163-492 (ELEADIAHHW…IDWQVDAARW (330 aa)) are solute-binding.

Activates the small RNA gene sgrS under glucose-phosphate stress conditions as well as yfdZ. Represses its own transcription under both stress and non-stress conditions. Might act as a sensor of the intracellular accumulation of phosphoglucose by binding these molecules in its C-terminal solute-binding domain. The chain is HTH-type transcriptional regulator SgrR from Escherichia coli O157:H7.